The following is a 200-amino-acid chain: Small ribosomal subunit protein uS4c (200 aa).

A disordered region spans residues Gly-20–Pro-42. Over residues Arg-23–Thr-37 the composition is skewed to polar residues. The S4 RNA-binding domain occupies Met-90 to Tyr-152.

The protein belongs to the universal ribosomal protein uS4 family. As to quaternary structure, part of the 30S ribosomal subunit. Contacts protein S5. The interaction surface between S4 and S5 is involved in control of translational fidelity.

The protein resides in the plastid. The protein localises to the chloroplast. In terms of biological role, one of the primary rRNA binding proteins, it binds directly to 16S rRNA where it nucleates assembly of the body of the 30S subunit. Its function is as follows. With S5 and S12 plays an important role in translational accuracy. The polypeptide is Small ribosomal subunit protein uS4c (rps4) (Guillardia theta (Cryptophyte)).